The primary structure comprises 125 residues: Large-conductance mechanosensitive channel (125 aa).

A run of 3 helical transmembrane segments spans residues 19–39 (VGVIIGAAFTAIVKSLVSNLI), 42–62 (LIGIFLGKIDLSNLVFSIGSA), and 67–87 (GSFLNEVINFLIIAFVVFLMV).

It belongs to the MscL family. In terms of assembly, homopentamer.

It is found in the cell membrane. Its function is as follows. Channel that opens in response to stretch forces in the membrane lipid bilayer. May participate in the regulation of osmotic pressure changes within the cell. The protein is Large-conductance mechanosensitive channel of Limosilactobacillus fermentum (strain NBRC 3956 / LMG 18251) (Lactobacillus fermentum).